Reading from the N-terminus, the 272-residue chain is NH(3)-dependent NAD(+) synthetase (272 aa).

45–52 (GISGGQDS) provides a ligand contact to ATP. Asp51 contributes to the Mg(2+) binding site. Arg138 serves as a coordination point for deamido-NAD(+). Thr158 serves as a coordination point for ATP. Glu163 contributes to the Mg(2+) binding site. Deamido-NAD(+) is bound by residues Lys171 and Asp178. Residues Lys187 and Thr209 each contribute to the ATP site. 258-259 (HK) is a deamido-NAD(+) binding site.

The protein belongs to the NAD synthetase family. As to quaternary structure, homodimer.

The enzyme catalyses deamido-NAD(+) + NH4(+) + ATP = AMP + diphosphate + NAD(+) + H(+). It functions in the pathway cofactor biosynthesis; NAD(+) biosynthesis; NAD(+) from deamido-NAD(+) (ammonia route): step 1/1. Its function is as follows. Catalyzes the ATP-dependent amidation of deamido-NAD to form NAD. Uses ammonia as a nitrogen source. This is NH(3)-dependent NAD(+) synthetase from Bacillus cereus (strain ATCC 10987 / NRS 248).